Consider the following 503-residue polypeptide: Aspartyl/glutamyl-tRNA(Asn/Gln) amidotransferase subunit B (503 aa).

This sequence belongs to the GatB/GatE family. GatB subfamily. Heterotrimer of A, B and C subunits.

The enzyme catalyses L-glutamyl-tRNA(Gln) + L-glutamine + ATP + H2O = L-glutaminyl-tRNA(Gln) + L-glutamate + ADP + phosphate + H(+). The catalysed reaction is L-aspartyl-tRNA(Asn) + L-glutamine + ATP + H2O = L-asparaginyl-tRNA(Asn) + L-glutamate + ADP + phosphate + 2 H(+). Allows the formation of correctly charged Asn-tRNA(Asn) or Gln-tRNA(Gln) through the transamidation of misacylated Asp-tRNA(Asn) or Glu-tRNA(Gln) in organisms which lack either or both of asparaginyl-tRNA or glutaminyl-tRNA synthetases. The reaction takes place in the presence of glutamine and ATP through an activated phospho-Asp-tRNA(Asn) or phospho-Glu-tRNA(Gln). The protein is Aspartyl/glutamyl-tRNA(Asn/Gln) amidotransferase subunit B of Mycolicibacterium smegmatis (strain ATCC 700084 / mc(2)155) (Mycobacterium smegmatis).